The sequence spans 207 residues: Sodium/potassium-transporting ATPase subunit beta-1-interacting protein 1 (207 aa).

The next 3 membrane-spanning stretches (helical) occupy residues 2-22, 35-55, and 62-82; these read GRCS…AAAL, APIL…LGTL, and LILY…IICF. Asn100 carries an N-linked (GlcNAc...) asparagine glycan. A helical transmembrane segment spans residues 147–167; that stretch reads ALSSALQIFLALFGFVYACYV.

Belongs to the NKAIN family. As to quaternary structure, interacts with atp1b1 C-terminus.

It is found in the cell membrane. The sequence is that of Sodium/potassium-transporting ATPase subunit beta-1-interacting protein 1 (nkain1) from Xenopus tropicalis (Western clawed frog).